The chain runs to 271 residues: Probable protein VP2 (271 aa).

Disordered stretches follow at residues 49-103, 124-146, and 203-271; these read GGPP…DAAA, QCSN…PIDT, and LQQR…RVST. The segment covering 50-61 has biased composition (pro residues); that stretch reads GPPPPGGPPPGT. The segment covering 87-99 has biased composition (gly residues); that stretch reads GEGGAAGPPGAGG. Residues 207–216 are compositionally biased toward basic and acidic residues; it reads QQRESSESPK. Positions 217-238 are enriched in basic residues; the sequence is KAHIQRKKGRKPLQKSRRRRRQ. The segment covering 239–259 has biased composition (low complexity); sequence YSSSSDDSESSGSSSSSSNSS.

Phosphorylated at C-terminal serines.

This chain is Probable protein VP2, found in Torque teno virus (isolate Human/Japan/SANBAN/1999) (TTV).